Consider the following 508-residue polypeptide: Photosystem II CP47 reaction center protein (508 aa).

The next 6 membrane-spanning stretches (helical) occupy residues 21 to 36 (AVHI…WAGS), 101 to 115 (IVFS…TWHW), 140 to 156 (GIHL…FGAF), 203 to 218 (VAAG…FHLS), 237 to 252 (VLSS…AFIV), and 457 to 472 (TFAL…HGAR).

It belongs to the PsbB/PsbC family. PsbB subfamily. As to quaternary structure, PSII is composed of 1 copy each of membrane proteins PsbA, PsbB, PsbC, PsbD, PsbE, PsbF, PsbH, PsbI, PsbJ, PsbK, PsbL, PsbM, PsbT, PsbX, PsbY, PsbZ, Psb30/Ycf12, at least 3 peripheral proteins of the oxygen-evolving complex and a large number of cofactors. It forms dimeric complexes. The cofactor is Binds multiple chlorophylls. PSII binds additional chlorophylls, carotenoids and specific lipids..

It localises to the plastid. Its subcellular location is the chloroplast thylakoid membrane. One of the components of the core complex of photosystem II (PSII). It binds chlorophyll and helps catalyze the primary light-induced photochemical processes of PSII. PSII is a light-driven water:plastoquinone oxidoreductase, using light energy to abstract electrons from H(2)O, generating O(2) and a proton gradient subsequently used for ATP formation. The sequence is that of Photosystem II CP47 reaction center protein from Welwitschia mirabilis (Tree tumbo).